Consider the following 394-residue polypeptide: Phosphoglycerate kinase (394 aa).

Substrate contacts are provided by residues 21–23 (DFN), arginine 36, 59–62 (HLGR), arginine 118, and arginine 151. A Phosphoserine modification is found at serine 183. Residues lysine 201 and glycine 292 each contribute to the ATP site. Threonine 299 is subject to Phosphothreonine. Residues glutamate 323 and 350–353 (GGDS) each bind ATP.

It belongs to the phosphoglycerate kinase family. As to quaternary structure, monomer.

It localises to the cytoplasm. It carries out the reaction (2R)-3-phosphoglycerate + ATP = (2R)-3-phospho-glyceroyl phosphate + ADP. The protein operates within carbohydrate degradation; glycolysis; pyruvate from D-glyceraldehyde 3-phosphate: step 2/5. In Priestia megaterium (strain DSM 319 / IMG 1521) (Bacillus megaterium), this protein is Phosphoglycerate kinase (pgk).